Reading from the N-terminus, the 499-residue chain is Centrosomal protein of 57 kDa (499 aa).

A compositionally biased stretch (polar residues) spans 1–35 (MAAASVSETSASQFSNILAEPSKSNGSMVRHSSSP). Residues 1–58 (MAAASVSETSASQFSNILAEPSKSNGSMVRHSSSPYVVYPPDKPFLNSDLRRSPNKPT) are disordered. At serine 53 the chain carries Phosphoserine. Positions 58–239 (TFAYPESNSR…KAAQLQTGLE (182 aa)) are centrosome localization domain (CLD). Residues 63–241 (ESNSRAIFSA…AQLQTGLEVN (179 aa)) are a coiled coil. Residues 277–490 (AVQPHYRLCL…KDMQSIQNSL (214 aa)) are mediates interaction with microtubules. 2 disordered regions span residues 334–357 (KQVSSRTGKSKKSATPPSSSSVNE) and 431–476 (KQKK…SRKN). Positions 346 to 357 (SATPPSSSSVNE) are enriched in low complexity. A coiled-coil region spans residues 389-450 (TVELKDNLEC…KTLDEEGNSS (62 aa)). The segment covering 431 to 444 (KQKKELKATRKTLD) has biased composition (basic and acidic residues). Residues 449–459 (SSSRSTTTGTT) show a composition bias toward low complexity. Over residues 460–474 (NKKDFAKPRPGEKSR) the composition is skewed to basic and acidic residues.

It belongs to the translokin family. As to quaternary structure, homodimer and homooligomer. Interacts with FGF2 and RAP80. Does not interact with FGF1 or FGF2 isoform 24 kDa. Interacts with microtubules.

It localises to the nucleus. The protein resides in the cytoplasm. It is found in the cytoskeleton. The protein localises to the microtubule organizing center. Its subcellular location is the centrosome. In terms of biological role, centrosomal protein which may be required for microtubule attachment to centrosomes. May act by forming ring-like structures around microtubules. Mediates nuclear translocation and mitogenic activity of the internalized growth factor FGF2. This is Centrosomal protein of 57 kDa (CEP57) from Bos taurus (Bovine).